Here is a 579-residue protein sequence, read N- to C-terminus: YTH domain-containing family protein 2 (579 aa).

The segment at 1-45 (MSASSLLEQRPKGQGNKVQNGSVHQKDGLNDDDFEPYLSPQARPN) is disordered. Ser2 is subject to N-acetylserine. Phosphoserine is present on residues Ser2, Ser4, Ser5, Ser22, Ser39, and Ser196. The interval 2-384 (SASSLLEQRP…QAGSGSTPSE (383 aa)) is localization to mRNA processing bodies (P-bodies). The disordered stretch occupies residues 247–387 (AKQQPKLKTK…SGSTPSEPHP (141 aa)). Positions 291-316 (ALVQNIGQPTQGSPQPVGQQANNSPP) are enriched in polar residues. Positions 337–349 (AQLSVQQQAAQPT) are enriched in low complexity. Ser359 carries the phosphoserine modification. Residues 359-371 (SGFGHNGVDGNGV) are compositionally biased toward gly residues. The span at 372 to 383 (GQSQAGSGSTPS) shows a compositional bias: polar residues. The interaction with m6A-containing mRNAs stretch occupies residues 385–579 (PHPVLEKLRS…VKKERQGRGK (195 aa)). Ser394 is modified (phosphoserine). One can recognise a YTH domain in the interval 410–544 (GRVFIIKSYS…EKAKQVLKII (135 aa)). Residues 416–418 (KSY), Asp422, 432–433 (WC), Asn462, Trp486, and Trp491 contribute to the RNA site.

Belongs to the YTHDF family. YTHDF2 subfamily. In terms of assembly, interacts with CNOT1; interaction is direct and promotes recruitment of the CCR4-NOT complex. Interacts with YTHDF3. Interacts with RIDA/HRSP12; interaction leads to recruitment of the ribonuclease P/MRP complex. Ubiquitinated by the SCF(SKP2) complex, leading to its degradation. Highly expressed in induced pluripotent stem cells (iPSCs) and down-regulated during neural differentiation.

It is found in the cytoplasm. It localises to the cytosol. The protein resides in the P-body. The protein localises to the stress granule. Its subcellular location is the nucleus. In terms of biological role, specifically recognizes and binds N6-methyladenosine (m6A)-containing RNAs, and regulates their stability. M6A is a modification present at internal sites of mRNAs and some non-coding RNAs and plays a role in mRNA stability and processing. Acts as a regulator of mRNA stability by promoting degradation of m6A-containing mRNAs via interaction with the CCR4-NOT and ribonuclease P/MRP complexes, depending on the context. The YTHDF paralogs (YTHDF1, YTHDF2 and YTHDF3) share m6A-containing mRNAs targets and act redundantly to mediate mRNA degradation and cellular differentiation. M6A-containing mRNAs containing a binding site for RIDA/HRSP12 (5'-GGUUC-3') are preferentially degraded by endoribonucleolytic cleavage: cooperative binding of RIDA/HRSP12 and YTHDF2 to transcripts leads to recruitment of the ribonuclease P/MRP complex. Other m6A-containing mRNAs undergo deadenylation via direct interaction between YTHDF2 and CNOT1, leading to recruitment of the CCR4-NOT and subsequent deadenylation of m6A-containing mRNAs. Required maternally to regulate oocyte maturation: probably acts by binding to m6A-containing mRNAs, thereby regulating maternal transcript dosage during oocyte maturation, which is essential for the competence of oocytes to sustain early zygotic development. Also required during spermatogenesis: regulates spermagonial adhesion by promoting degradation of m6A-containing transcripts coding for matrix metallopeptidases. Also involved in hematopoietic stem cells specification by binding to m6A-containing mRNAs, leading to promote their degradation. Also acts as a regulator of neural development by promoting m6A-dependent degradation of neural development-related mRNA targets. Inhibits neural specification of induced pluripotent stem cells by binding to methylated neural-specific mRNAs and promoting their degradation, thereby restraining neural differentiation. Regulates circadian regulation of hepatic lipid metabolism: acts by promoting m6A-dependent degradation of PPARA transcripts. Regulates the innate immune response to infection by inhibiting the type I interferon response: acts by binding to m6A-containing IFNB transcripts and promoting their degradation. May also act as a promoter of cap-independent mRNA translation following heat shock stress: upon stress, relocalizes to the nucleus and specifically binds mRNAs with some m6A methylation mark at their 5'-UTR, protecting demethylation of mRNAs by FTO, thereby promoting cap-independent mRNA translation. Regulates mitotic entry by promoting the phase-specific m6A-dependent degradation of WEE1 transcripts. Promotes formation of phase-separated membraneless compartments, such as P-bodies or stress granules, by undergoing liquid-liquid phase separation upon binding to mRNAs containing multiple m6A-modified residues: polymethylated mRNAs act as a multivalent scaffold for the binding of YTHDF proteins, juxtaposing their disordered regions and thereby leading to phase separation. The resulting mRNA-YTHDF complexes then partition into different endogenous phase-separated membraneless compartments, such as P-bodies, stress granules or neuronal RNA granules. May also recognize and bind RNAs modified by C5-methylcytosine (m5C) and act as a regulator of rRNA processing. (Microbial infection) Promotes viral gene expression and replication of polyomavirus SV40: acts by binding to N6-methyladenosine (m6A)-containing viral RNAs. Functionally, (Microbial infection) Promotes viral gene expression and virion production of kaposis sarcoma-associated herpesvirus (KSHV) at some stage of the KSHV life cycle (in iSLK.219 and iSLK.BAC16 cells). Acts by binding to N6-methyladenosine (m6A)-containing viral RNAs. The sequence is that of YTH domain-containing family protein 2 from Homo sapiens (Human).